The sequence spans 416 residues: MSQPSTANGGFPSVVVTAVTATTSISPDIESTWKGLLAGESGIHALEDEFVTKWDLAVKIGGHLKDPVDSHMGRLDMRRMSYVQRMGKLLGGQLWESAGSPEVDPDRFAVVVGTGLGGAERIVESYDLMNAGGPRKVSPLAVQMIMPNGAAAVIGLQLGARAGVMTPVSACSSGSEAIAHAWRQIVMGDADVAVCGGVEGPIEALPIAAFSMMRAMSTRNDEPERASRPFDKDRDGFVFGEAGALMLIETEEHAKARGAKPLARLLGAGITSDAFHMVAPAADGVRAGRAMTRSLELAGLSPADIDHVNAHGTATPIGDAAEANAIRVAGCDQAAVYAPKSALGHSIGAVGALESVLTVLTLRDGVIPPTLNYETPDPEIDLDVVAGEPRYGDYRYAVNNSFGFGGHNVALAFGRY.

One can recognise a Ketosynthase family 3 (KS3) domain in the interval 11–415; that stretch reads FPSVVVTAVT…GHNVALAFGR (405 aa). Residues C171, H311, and H345 each act as for beta-ketoacyl synthase activity in the active site. The substrate site is built by H311 and H345.

This sequence belongs to the thiolase-like superfamily. Beta-ketoacyl-ACP synthases family.

The protein localises to the cytoplasm. It catalyses the reaction an ultra-long-chain mono-unsaturated fatty acyl-[ACP] + malonyl-[ACP] + H(+) = a 3-oxo-ultra-long-chain mono-unsaturated fatty acyl-[ACP] + holo-[ACP] + CO2. The protein operates within lipid metabolism; mycolic acid biosynthesis. Part of the mycobacterial fatty acid elongation system FAS-II, which is involved in mycolic acid biosynthesis. Catalyzes the elongation of long chain acyl-ACP substrates by the addition of two carbons from malonyl-ACP to an acyl acceptor. Involved in the initial extension of the mycolate chain and forms monounsaturated fatty acids that averaged 40 carbons in length. The sequence is that of 3-oxoacyl-[acyl-carrier-protein] synthase 1 (kasA) from Mycobacterium tuberculosis (strain ATCC 35801 / TMC 107 / Erdman).